The sequence spans 663 residues: Innate immunity activator protein (663 aa).

The disordered stretch occupies residues 1–68 (MLQMPKLNEI…RLPTQPGPGW (68 aa)). Residues 40 to 50 (RAQGQAGGARA) are compositionally biased toward low complexity. Residues 118–147 (AVHKQQRALEARLEACLEELRRLCLREAEL) are a coiled coil. A Nuclear localization signal (NLS) 1 motif is present at residues 164–170 (PKVRRRI). 3 disordered regions span residues 242 to 362 (RRRN…ASSL), 378 to 425 (VPGQ…PRRR), and 444 to 493 (PLPH…RHRG). A compositionally biased stretch (low complexity) spans 259-272 (ELSASDDSSLSDGL). Positions 282–298 (PKPPPESPAPPSRPLPP) are enriched in pro residues. A compositionally biased stretch (basic and acidic residues) spans 327–340 (TSLDHPYEKPRKSS). A Nuclear localization signal (NLS) 2 motif is present at residues 332 to 338 (PYEKPRK). Residues 350 to 361 (ATTPQDGPSASS) show a composition bias toward polar residues. The Nuclear localization signal (NLS) 3 signature appears at 422 to 428 (PRRRPTH). Residues 455 to 475 (EDSGSDVSSISHPTSPGSSSP) show a composition bias toward low complexity.

In terms of assembly, interacts with IRAK1, NOD2 and RIPK2; the interaction takes place upon PRR stimulation. Interacts with YWHAQ/14-3-3T; the interaction increases upon PRR stimulation and is required for cellular signaling pathway activation and cytokine secretion. Interacts (via N-terminal domain) with CYTH1 and CYTH2 (via their N-terminal domains). Interacts with FBXW11 and BTRC; associates with SCF E3 ubiquitin-protein ligase complexes. As to expression, highly expressed in intestinal myeloid-derived cells and expressed in monocyte-derived macrophages upon induction by PRR activation.

Its subcellular location is the nucleus. The protein resides in the cytoplasm. Expressed in peripheral macrophages and intestinal myeloid-derived cells, is required for optimal PRR (pattern recognition receptor)-induced signaling, cytokine secretion, and bacterial clearance. Upon stimulation of a broad range of PRRs (pattern recognition receptor) such as NOD2 or TLR2, TLR3, TLR4, TLR5, TLR7 and TLR9, associates with YWHAQ/14-3-3T, which in turn leads to the recruitment and activation of MAP kinases and NF-kappa-B signaling complexes that amplifies PRR-induced downstream signals and cytokine secretion. In the intestine, regulates adherens junction stability by regulating the degradation of CYTH1 and CYTH2, probably acting as substrate cofactor for SCF E3 ubiquitin-protein ligase complexes. Stabilizes adherens junctions by limiting CYTH1-dependent ARF6 activation. The protein is Innate immunity activator protein of Homo sapiens (Human).